The following is a 454-amino-acid chain: uncharacterized protein (454 aa).

[4Fe-4S] cluster-binding residues include Cys-73, Cys-79, Cys-82, and Cys-154. The S-adenosyl-L-methionine site is built by Gln-279, Phe-307, Asp-328, and Asp-381. Catalysis depends on Cys-408, which acts as the Nucleophile.

It belongs to the class I-like SAM-binding methyltransferase superfamily. RNA M5U methyltransferase family.

This is an uncharacterized protein from Leptospira interrogans serogroup Icterohaemorrhagiae serovar Lai (strain 56601).